A 201-amino-acid polypeptide reads, in one-letter code: Mediator of RNA polymerase II transcription subunit 22 (201 aa).

A coiled-coil region spans residues 93-123 (SVNESINQRNQQLRTLREECDKKLIALRDDI). A disordered region spans residues 182 to 201 (SQIHTPPHLNGHGAGMTEHT).

This sequence belongs to the Mediator complex subunit 22 family. In terms of assembly, component of the Mediator complex.

It localises to the nucleus. Functionally, component of the Mediator complex, a coactivator involved in the regulated transcription of nearly all RNA polymerase II-dependent genes. Mediator functions as a bridge to convey information from gene-specific regulatory proteins to the basal RNA polymerase II transcription machinery. Mediator is recruited to promoters by direct interactions with regulatory proteins and serves as a scaffold for the assembly of a functional preinitiation complex with RNA polymerase II and the general transcription factors. The chain is Mediator of RNA polymerase II transcription subunit 22 (med22) from Xenopus laevis (African clawed frog).